Here is an 858-residue protein sequence, read N- to C-terminus: DNA mismatch repair protein MutS (858 aa).

600-607 contributes to the ATP binding site; the sequence is GPNMSGKS.

Belongs to the DNA mismatch repair MutS family.

Functionally, this protein is involved in the repair of mismatches in DNA. It is possible that it carries out the mismatch recognition step. This protein has a weak ATPase activity. The chain is DNA mismatch repair protein MutS from Bacillus pumilus (strain SAFR-032).